Here is a 266-residue protein sequence, read N- to C-terminus: Type III pantothenate kinase (266 aa).

ATP is bound at residue 9 to 16 (DAGNSRIK). Substrate is bound by residues Tyr96 and 103–106 (GSDR). The active-site Proton acceptor is Asp105. Thr129 contributes to the ATP binding site. Residue Thr189 coordinates substrate.

It belongs to the type III pantothenate kinase family. As to quaternary structure, homodimer. The cofactor is NH4(+). It depends on K(+) as a cofactor.

Its subcellular location is the cytoplasm. The enzyme catalyses (R)-pantothenate + ATP = (R)-4'-phosphopantothenate + ADP + H(+). It functions in the pathway cofactor biosynthesis; coenzyme A biosynthesis; CoA from (R)-pantothenate: step 1/5. Its function is as follows. Catalyzes the phosphorylation of pantothenate (Pan), the first step in CoA biosynthesis. The chain is Type III pantothenate kinase from Burkholderia lata (strain ATCC 17760 / DSM 23089 / LMG 22485 / NCIMB 9086 / R18194 / 383).